The chain runs to 289 residues: Oxaloacetate decarboxylase 1 (289 aa).

Ser-50 is a substrate binding site. Position 88 (Asp-88) interacts with Mg(2+). 2 residues coordinate substrate: Arg-159 and His-235.

It belongs to the isocitrate lyase/PEP mutase superfamily. Oxaloacetate decarboxylase family. In terms of assembly, homotetramer; dimer of dimers. Requires Mg(2+) as cofactor.

The catalysed reaction is oxaloacetate + H(+) = pyruvate + CO2. Catalyzes the decarboxylation of oxaloacetate into pyruvate. Seems to play a role in maintaining cellular concentrations of bicarbonate and pyruvate. The protein is Oxaloacetate decarboxylase 1 of Pseudomonas fluorescens (strain Pf0-1).